The sequence spans 473 residues: MRIASSSGILMDANGKANGSAPSALVAYFLGMGFSREMVFRAIKEIGDTDSEQILELLLTYQAIGSDPSVGNSSHSACDPQILEEEDEEEDVNWDEDDTVDNFDRATYSDGSGDEDFLQEMSEKDEKIKSLVSMGFPEDEDTEFSSFGGRKKTKLIDGSKKKRERYRSRPQWNQVPFDGSHEEPMPLPNSMVGFSLPNDGLRSVHRNLPDQALGPPFFYYENVALAPKGVWTTISRFLYDIYPEFVYSKYFCAAARKRGYIHNLPIKNRNYTRGVSRTARYRALGNSFQVDTVAYHLSVLRDIFPNGMNVLSLFSGIGGAEVALHRLGICMKTVVLVEISEVNMTLLRSWWDQTQTGTLIEIADVQNLTAERIELFIRRFGGFDLVIGGSPCNNLAGSNRYHRDGLEGKHSALFYHYYRILDSVKTIMASIFGAKGKLFRHVRKALLLKQSSSLTLKTEQDPSNNSDKDSMDK.

The UBA 1 domain maps to 20-61 (SAPSALVAYFLGMGFSREMVFRAIKEIGDTDSEQILELLLTY). Residues 84–101 (EEEDEEEDVNWDEDDTVD) show a composition bias toward acidic residues. Residues 84 to 115 (EEEDEEEDVNWDEDDTVDNFDRATYSDGSGDE) form a disordered region. A UBA 2 domain is found at 120 to 140 (EMSEKDEKIKSLVSMGFPEDE). Residues 204 to 431 (VHRNLPDQAL…DSVKTIMASI (228 aa)) form the SAM-dependent MTase DRM-type domain.

This sequence belongs to the class I-like SAM-binding methyltransferase superfamily. DRM-methyltransferase family.

The protein localises to the nucleus. It carries out the reaction a 2'-deoxycytidine in DNA + S-adenosyl-L-methionine = a 5-methyl-2'-deoxycytidine in DNA + S-adenosyl-L-homocysteine + H(+). In terms of biological role, involved in de novo DNA methylation. Involved in RNA-directed DNA methylation (RdDM). This Oryza sativa subsp. japonica (Rice) protein is DNA (cytosine-5)-methyltransferase DRM1A.